We begin with the raw amino-acid sequence, 345 residues long: Acetylserotonin O-methyltransferase (345 aa).

S-adenosyl-L-methionine contacts are provided by residues tyrosine 147, tryptophan 164, aspartate 210, glycine 235–phenylalanine 237, and arginine 252. The active-site Proton donor/acceptor is histidine 255. The substrate site is built by aspartate 256, asparagine 302, and glutamine 306.

The protein belongs to the class I-like SAM-binding methyltransferase superfamily. Cation-independent O-methyltransferase family. In terms of assembly, homodimer. Expressed in the pineal gland (at protein level). Not detectable in retina, nor in liver.

It catalyses the reaction N-acetylserotonin + S-adenosyl-L-methionine = melatonin + S-adenosyl-L-homocysteine + H(+). Its pathway is aromatic compound metabolism; melatonin biosynthesis; melatonin from serotonin: step 1/2. Catalyzes the transfer of a methyl group onto N-acetylserotonin, producing melatonin (N-acetyl-5-methoxytryptamine). The protein is Acetylserotonin O-methyltransferase (ASMT) of Bos taurus (Bovine).